The sequence spans 449 residues: Signal recognition particle protein (449 aa).

Residues 109–116, 191–195, and 249–252 contribute to the GTP site; these read GLQGSGKT, DTAGR, and SRID.

Belongs to the GTP-binding SRP family. SRP54 subfamily. Part of the signal recognition particle protein translocation system, which is composed of SRP and FtsY. SRP is a ribonucleoprotein composed of Ffh and a 4.5S RNA molecule.

It localises to the cytoplasm. It carries out the reaction GTP + H2O = GDP + phosphate + H(+). Its function is as follows. Involved in targeting and insertion of nascent membrane proteins into the cytoplasmic membrane. Binds to the hydrophobic signal sequence of the ribosome-nascent chain (RNC) as it emerges from the ribosomes. The SRP-RNC complex is then targeted to the cytoplasmic membrane where it interacts with the SRP receptor FtsY. Interaction with FtsY leads to the transfer of the RNC complex to the Sec translocase for insertion into the membrane, the hydrolysis of GTP by both Ffh and FtsY, and the dissociation of the SRP-FtsY complex into the individual components. This is Signal recognition particle protein from Rickettsia bellii (strain RML369-C).